A 123-amino-acid chain; its full sequence is Small ribosomal subunit protein uS13 (123 aa).

A disordered region spans residues 96–123 (LPVRGQRTKTNARTRKGPKKTVGARRKK).

It belongs to the universal ribosomal protein uS13 family. As to quaternary structure, part of the 30S ribosomal subunit. Forms a loose heterodimer with protein S19. Forms two bridges to the 50S subunit in the 70S ribosome.

Located at the top of the head of the 30S subunit, it contacts several helices of the 16S rRNA. In the 70S ribosome it contacts the 23S rRNA (bridge B1a) and protein L5 of the 50S subunit (bridge B1b), connecting the 2 subunits; these bridges are implicated in subunit movement. Contacts the tRNAs in the A and P-sites. The polypeptide is Small ribosomal subunit protein uS13 (Desulforamulus reducens (strain ATCC BAA-1160 / DSM 100696 / MI-1) (Desulfotomaculum reducens)).